A 394-amino-acid polypeptide reads, in one-letter code: 8-amino-7-oxononanoate synthase (394 aa).

R18 lines the substrate pocket. G105 to Y106 contacts pyridoxal 5'-phosphate. H130 lines the substrate pocket. S175, H203, and T232 together coordinate pyridoxal 5'-phosphate. At K235 the chain carries N6-(pyridoxal phosphate)lysine. T349 contacts substrate.

This sequence belongs to the class-II pyridoxal-phosphate-dependent aminotransferase family. BioF subfamily. In terms of assembly, homodimer. Requires pyridoxal 5'-phosphate as cofactor.

It catalyses the reaction 6-carboxyhexanoyl-[ACP] + L-alanine + H(+) = (8S)-8-amino-7-oxononanoate + holo-[ACP] + CO2. It functions in the pathway cofactor biosynthesis; biotin biosynthesis. Catalyzes the decarboxylative condensation of pimeloyl-[acyl-carrier protein] and L-alanine to produce 8-amino-7-oxononanoate (AON), [acyl-carrier protein], and carbon dioxide. The protein is 8-amino-7-oxononanoate synthase of Marinobacter nauticus (strain ATCC 700491 / DSM 11845 / VT8) (Marinobacter aquaeolei).